Consider the following 224-residue polypeptide: Orotate phosphoribosyltransferase (224 aa).

Position 29 (Lys-29) interacts with 5-phospho-alpha-D-ribose 1-diphosphate. An orotate-binding site is contributed by 37–38 (FF). 5-phospho-alpha-D-ribose 1-diphosphate contacts are provided by residues 75-76 (YK), Arg-105, Lys-106, Lys-109, His-111, and 130-138 (DDVITAGTS). Residues Thr-134 and Arg-162 each coordinate orotate.

The protein belongs to the purine/pyrimidine phosphoribosyltransferase family. PyrE subfamily. As to quaternary structure, homodimer. The cofactor is Mg(2+).

The enzyme catalyses orotidine 5'-phosphate + diphosphate = orotate + 5-phospho-alpha-D-ribose 1-diphosphate. Its pathway is pyrimidine metabolism; UMP biosynthesis via de novo pathway; UMP from orotate: step 1/2. Functionally, catalyzes the transfer of a ribosyl phosphate group from 5-phosphoribose 1-diphosphate to orotate, leading to the formation of orotidine monophosphate (OMP). The protein is Orotate phosphoribosyltransferase of Bordetella pertussis (strain Tohama I / ATCC BAA-589 / NCTC 13251).